A 177-amino-acid chain; its full sequence is CCHC-type zinc finger nucleic acid binding protein (177 aa).

Ser2 is subject to N-acetylserine. The CCHC-type 1 zinc finger occupies 4–21; sequence NECFKCGRSGHWARECPT. The residue at position 8 (Lys8) is an N6-acetyllysine. Omega-N-methylarginine; by PRMT1 is present on residues Arg25 and Arg27. Residues 25-38 are RNA-binding Arg/Gly-rich region (RGG-box); that stretch reads RGRGMRSRGRGGFT. Omega-N-methylarginine occurs at positions 32 and 34. At Ser49 the chain carries Phosphoserine. 6 consecutive CCHC-type zinc fingers follow at residues 52–69, 72–89, 96–113, 117–134, 135–152, and 156–173; these read DICY…DCDL, DACY…DCKE, QCCY…DCDH, QKCY…DCTK, VKCY…NCSK, and VNCY…ECTI. 3 positions are modified to omega-N-methylarginine: Ala73, Arg79, and Gly80.

In terms of assembly, associates with the 40S ribosomal subunit, the 80S ribosome and with polysomes. Arginine methylation by PRMT1 in the Arg/Gly-rich region impedes RNA binding. As to expression, expressed in the liver, kidney, spleen, testis, lung, muscle and adrenal glands.

The protein localises to the nucleus. Its subcellular location is the cytoplasm. The protein resides in the endoplasmic reticulum. In terms of biological role, single-stranded DNA-binding protein that preferentially binds to the sterol regulatory element (SRE) sequence 5'-GTGCGGTG-3', and thereby mediates transcriptional repression. Has a role as transactivator of the Myc promoter. Binds single-stranded RNA in a sequence-specific manner. Binds G-rich elements in target mRNA coding sequences. Prevents G-quadruplex structure formation in vitro, suggesting a role in supporting translation by resolving stable structures on mRNAs. Functionally, binds to RNA. This Homo sapiens (Human) protein is CCHC-type zinc finger nucleic acid binding protein.